The primary structure comprises 311 residues: m7GpppX diphosphatase (311 aa).

Residues Glu159, Lys181, and 242-253 (HYQPSFYHLHVH) each bind substrate. Residues 249–253 (HLHVH) carry the Histidine triad motif motif. The active-site Nucleophile is His251.

It belongs to the HIT family. In terms of tissue distribution, expressed in neurons in the ventral cord, the nerve ring and the pharynx.

The protein resides in the nucleus. It carries out the reaction a 5'-end (N(7)-methyl 5'-triphosphoguanosine)-ribonucleoside in mRNA + H2O = N(7)-methyl-GMP + a 5'-end diphospho-ribonucleoside in mRNA + 2 H(+). The catalysed reaction is a 5'-end (N(2),N(2),N(7)-trimethyl 5'-triphosphoguanosine)-ribonucleoside in mRNA + H2O = (N(2),N(2),N(7))-trimethyl-GMP + a 5'-end diphospho-ribonucleoside in mRNA + 2 H(+). The hydrolytic product 7-methylguanosine diphosphate (m7GDP) efficiently inhibits the decapping scavenger activity and acts as a competitive inhibitor in vitro. Its function is as follows. Decapping scavenger enzyme that catalyzes the cleavage of a residual cap structure following the degradation of mRNAs of the 3'-&gt;5' exosome-mediated mRNA decay pathway. Hydrolyzes cap analog structures like 7-methylguanosine nucleoside triphosphate (m7GpppG) and tri-methyl guanosine nucleoside triphosphate (m3(2,2,7)GpppG) with up to 2 nucleotide substrates (small capped oligoribonucleotides) and specifically releases 5'-phosphorylated RNA fragments and 7-methylguanosine monophosphate (m7GMP). Does not hydrolyze unmethylated cap analog (GpppG) and shows no decapping activity on intact m7GpppG-capped mRNA molecules. Does not hydrolyze 7-methylguanosine diphosphate (m7GDP) and tri-methylguanosine diphosphate (m3(2,2,7)GDP) to m(7)GMP and m3(2,2,7)GMP, respectively. May also play a role in the 5'-&gt;3 mRNA decay pathway; m7GDP, the downstream product released by the 5'-&gt;3' mRNA mediated decapping activity, may be also converted by dcs-1 to m7GMP. Binds to m7GpppG and strongly to m7GDP. The polypeptide is m7GpppX diphosphatase (dcs-1) (Caenorhabditis elegans).